The chain runs to 432 residues: Succinate--CoA ligase [GDP-forming] subunit beta, mitochondrial (432 aa).

The N-terminal 37 residues, Met-1–Trp-37, are a transit peptide targeting the mitochondrion. The ATP-grasp domain occupies Lys-46–Phe-274. Gln-57 contributes to the GTP binding site. Lys-73 carries the post-translational modification N6-acetyllysine. Position 78 is an N6-succinyllysine (Lys-78). Gly-90–Gly-92 lines the GTP pocket. 2 positions are modified to N6-acetyllysine: Lys-132 and Lys-139. A GTP-binding site is contributed by Leu-146. Ser-161 carries the post-translational modification Phosphoserine. N6-acetyllysine occurs at positions 200, 218, and 227. Residues Asn-243 and Asp-257 each coordinate Mg(2+). Residues Lys-271 and Lys-291 each carry the N6-acetyllysine modification. Position 308 (Asn-308) interacts with substrate. An N6-succinyllysine modification is found at Lys-338. At Lys-347 the chain carries N6-acetyllysine. Residue Gly-365 to Val-367 participates in substrate binding. 2 positions are modified to N6-acetyllysine: Lys-386 and Lys-423.

Belongs to the succinate/malate CoA ligase beta subunit family. GTP-specific subunit beta subfamily. In terms of assembly, heterodimer of an alpha and a beta subunit. The beta subunit determines specificity for GTP. It depends on Mg(2+) as a cofactor. Mainly expressed in liver, kidney, heart, spleen and skeletal muscle. Also found in intestine and colon, and in low amounts in lung, brain, prostate, testis and ovary.

Its subcellular location is the mitochondrion. It carries out the reaction GTP + succinate + CoA = succinyl-CoA + GDP + phosphate. It participates in carbohydrate metabolism; tricarboxylic acid cycle; succinate from succinyl-CoA (ligase route): step 1/1. Functionally, GTP-specific succinyl-CoA synthetase functions in the citric acid cycle (TCA), coupling the hydrolysis of succinyl-CoA to the synthesis of GTP and thus represents the only step of substrate-level phosphorylation in the TCA. The beta subunit provides nucleotide specificity of the enzyme and binds the substrate succinate, while the binding sites for coenzyme A and phosphate are found in the alpha subunit. The chain is Succinate--CoA ligase [GDP-forming] subunit beta, mitochondrial from Homo sapiens (Human).